Here is a 500-residue protein sequence, read N- to C-terminus: 2-isopropylmalate synthase (500 aa).

The Pyruvate carboxyltransferase domain maps to 5–266 (LFIFDTTLRD…ITNITTNKIY (262 aa)). Mn(2+) contacts are provided by Asp-14, His-202, His-204, and Asn-238. The regulatory domain stretch occupies residues 389–500 (KLEYLQVTSG…VDAINKFIVD (112 aa)).

Belongs to the alpha-IPM synthase/homocitrate synthase family. LeuA type 1 subfamily. Homodimer. Mn(2+) serves as cofactor.

It is found in the cytoplasm. The catalysed reaction is 3-methyl-2-oxobutanoate + acetyl-CoA + H2O = (2S)-2-isopropylmalate + CoA + H(+). It functions in the pathway amino-acid biosynthesis; L-leucine biosynthesis; L-leucine from 3-methyl-2-oxobutanoate: step 1/4. Catalyzes the condensation of the acetyl group of acetyl-CoA with 3-methyl-2-oxobutanoate (2-ketoisovalerate) to form 3-carboxy-3-hydroxy-4-methylpentanoate (2-isopropylmalate). This is 2-isopropylmalate synthase from Parabacteroides distasonis (strain ATCC 8503 / DSM 20701 / CIP 104284 / JCM 5825 / NCTC 11152).